The primary structure comprises 80 residues: Putative DNA-directed RNA polymerase subunit omega (80 aa).

The protein belongs to the RNA polymerase subunit omega family.

Its subcellular location is the plastid. It is found in the chloroplast. It carries out the reaction RNA(n) + a ribonucleoside 5'-triphosphate = RNA(n+1) + diphosphate. May be involved in RNA polymerase activity. The sequence is that of Putative DNA-directed RNA polymerase subunit omega from Gracilaria tenuistipitata var. liui (Red alga).